The chain runs to 165 residues: 3-isopropylmalate dehydratase small subunit 2 (165 aa).

It belongs to the LeuD family. LeuD type 2 subfamily. As to quaternary structure, heterodimer of LeuC and LeuD.

The enzyme catalyses (2R,3S)-3-isopropylmalate = (2S)-2-isopropylmalate. Its pathway is amino-acid biosynthesis; L-leucine biosynthesis; L-leucine from 3-methyl-2-oxobutanoate: step 2/4. Functionally, catalyzes the isomerization between 2-isopropylmalate and 3-isopropylmalate, via the formation of 2-isopropylmaleate. The chain is 3-isopropylmalate dehydratase small subunit 2 (leuD2) from Archaeoglobus fulgidus (strain ATCC 49558 / DSM 4304 / JCM 9628 / NBRC 100126 / VC-16).